The primary structure comprises 684 residues: Signal peptide peptidase-like 2C (684 aa).

Residues 1–21 form the signal peptide; the sequence is MACLGFLLPVGFLLLISTVAG. Residues 22-186 are Lumenal-facing; sequence GKYGVAHVVS…APPEPIIDYN (165 aa). One can recognise a PA domain in the interval 83 to 163; sequence SPSQRPLRQT…HYADMLDILS (81 aa). N100 carries an N-linked (GlcNAc...) asparagine glycan. A helical membrane pass occupies residues 187-207; the sequence is MLVIFILAVGTVAAGGYWAGL. Topologically, residues 208–253 are cytoplasmic; that stretch reads TEANRLQRRRARRGGGSGGHHQLQEAAAAEGAQKEDNEDIPVDFTP. Positions 216 to 242 are disordered; that stretch reads RRARRGGGSGGHHQLQEAAAAEGAQKE. Residues 227 to 238 are compositionally biased toward low complexity; it reads HHQLQEAAAAEG. Residues 254-274 traverse the membrane as a helical segment; it reads AMTGVVVTLSCSLMLLLYFFY. Topologically, residues 275–276 are lumenal; sequence DH. The chain crosses the membrane as a helical span at residues 277–297; the sequence is FVYVTIGIFGLGAGIGLYSCL. Residues 298–319 lie on the Cytoplasmic side of the membrane; that stretch reads SPLVCRLSLRQYQRPPHSLWAS. Residues 320-340 form a helical membrane-spanning segment; the sequence is LPLPLLLLASLCATVIIFWVA. Over 341–346 the chain is Lumenal; that stretch reads YRNEDR. A helical membrane pass occupies residues 347-365; it reads WAWLLQDTLGISYCLFVLH. The Cytoplasmic segment spans residues 366 to 376; sequence RVRLPTLKNCS. Residues 377–397 traverse the membrane as a helical segment; sequence SFLLALLAFDVFFVFVTPFFT. Residue D386 is part of the active site. At 398 to 439 the chain is on the lumenal side; sequence KTGESIMAQVALGPAESSSHERLPMVLKVPRLRVSALTLCSQ. Residues 440-460 form a helical membrane-spanning segment; the sequence is PFSILGFGDIVVPGFLVAYCC. The active site involves D448. Residues 461–472 lie on the Cytoplasmic side of the membrane; that stretch reads RFDVQVCSRQIY. Residues 473-493 form a helical membrane-spanning segment; the sequence is FVACTVAYAVGLLVTFMAMVL. The Lumenal segment spans residues 494–495; sequence MQ. Residues 496-516 form a helical membrane-spanning segment; sequence MGQPALLYLVSSTLLTSLAVA. The PAL motif lies at 499–501; sequence PAL. Residues 517-684 lie on the Cytoplasmic side of the membrane; it reads ACRQELSLFW…RKSMSTQAPL (168 aa). Positions 548–614 are disordered; that stretch reads KQEGAADAHT…SDAHLDPNEL (67 aa). A compositionally biased stretch (polar residues) spans 582-592; sequence EIVTISENEAT. A compositionally biased stretch (basic and acidic residues) spans 594–611; that stretch reads PEDRSDSSEGWSDAHLDP.

It belongs to the peptidase A22B family. In terms of assembly, interacts (via active sites) with FREY; the interaction stabilizes FREY1 protein and inhibits SPPL2C proteolytic activity. Post-translationally, glycosylated. In terms of tissue distribution, highly expressed in testis where it is primarily localised in spermatids (at protein level).

It localises to the endoplasmic reticulum membrane. Functionally, sperm-specific intramembrane-cleaving aspartic protease (I-CLiP) that cleaves distinct tail-anchored proteins and SNARE proteins. In elongated spermatids, modulates intracellular Ca(2+) homeostasis by controlling PLN abundance through proteolytic cleavage. During spermatogenesis, processes SNARE proteins and impacts vesicular trafficking which supports compartmental reorganization in maturating spermatids and may play a role in formation of the acrosome. In round spermatids, acts as a scaffold protein supporting FREY1 in IZUMO1 recruitment at the endoplasmic reticulum membrane and coordination of IZUMO1 complex assembly. Stabilizes FREY1 at the endoplasmic reticulum membrane through interaction. May recruit IZUMO1 interaction partners. This is Signal peptide peptidase-like 2C from Homo sapiens (Human).